A 70-amino-acid polypeptide reads, in one-letter code: U2-agatoxin-Ao1a (70 aa).

The signal sequence occupies residues 1–20 (MRAIISLFLISAMVFSMIQA). The propeptide occupies 21–34 (VPEEEGLQLSEDER). 3 disulfide bridges follow: cysteine 37–cysteine 53, cysteine 44–cysteine 58, and cysteine 52–cysteine 68. Leucine 69 bears the Leucine amide mark.

It belongs to the neurotoxin 01 (U2-agtx) family. As to expression, expressed by the venom gland.

It localises to the secreted. Its function is as follows. Insect active toxin causing rapid but reversible paralysis in crickets. No activity shown in mammals. Suppresses the excitatory postsynaptic potentials evoked in lobster neuromuscular synaptic preparations, possibly by blocking the presynaptic calcium channel. Induces instantaneous reversible paralysis when injected into crickets. Does not show effect on mammalian Cav2.1/CACNA1A, Cav2.2/CACNA1B and Cav2.3/CACNA1E. In Agelena orientalis (Funnel-web spider), this protein is U2-agatoxin-Ao1a.